The sequence spans 407 residues: Melanoma-associated antigen B6B (407 aa).

Over residues 1 to 16 (MPRGQKSKLRARGKRR) the composition is skewed to basic residues. The tract at residues 1-185 (MPRGQKSKLR…ESLSSSKRAA (185 aa)) is disordered. 2 stretches are compositionally biased toward polar residues: residues 56-68 (SGSS…QGAS) and 94-109 (PSTS…SQGA). Residues 123-132 (KSDEAAKGQN) are compositionally biased toward basic and acidic residues. Residues 133 to 155 (EKSPSTSRDASVPQESQGASPTG) show a composition bias toward polar residues. The region spanning 195–394 (IKRKANKMVQ…GLYPHLYEDA (200 aa)) is the MAGE domain.

In Homo sapiens (Human), this protein is Melanoma-associated antigen B6B.